A 140-amino-acid chain; its full sequence is Nucleoside diphosphate kinase (140 aa).

The ATP site is built by K11, F59, R87, T93, R104, and N114. H117 serves as the catalytic Pros-phosphohistidine intermediate.

Belongs to the NDK family. Homotetramer. The cofactor is Mg(2+).

The protein resides in the cytoplasm. The enzyme catalyses a 2'-deoxyribonucleoside 5'-diphosphate + ATP = a 2'-deoxyribonucleoside 5'-triphosphate + ADP. It carries out the reaction a ribonucleoside 5'-diphosphate + ATP = a ribonucleoside 5'-triphosphate + ADP. In terms of biological role, major role in the synthesis of nucleoside triphosphates other than ATP. The ATP gamma phosphate is transferred to the NDP beta phosphate via a ping-pong mechanism, using a phosphorylated active-site intermediate. The protein is Nucleoside diphosphate kinase of Rhodopseudomonas palustris (strain BisA53).